The sequence spans 343 residues: uncharacterized protein (343 aa).

A run of 11 helical transmembrane segments spans residues 13 to 33, 44 to 64, 71 to 91, 121 to 141, 148 to 168, 177 to 197, 203 to 223, 244 to 264, 269 to 289, 296 to 316, and 320 to 340; these read VILY…SMCG, LWGY…ATLD, MHPV…LFFI, ILLL…LTGL, NASL…YLIF, FLGI…GDFS, VAVT…LDTV, VGGF…ELPL, YALG…YIAI, MVGA…FIIL, and FSIM…ILYW. EamA domains lie at 55 to 192 and 216 to 340; these read IFFG…YLLT and FFWS…ILYW.

It belongs to the EamA transporter family.

It localises to the cell membrane. This is an uncharacterized protein from Methanothermobacter thermautotrophicus (strain ATCC 29096 / DSM 1053 / JCM 10044 / NBRC 100330 / Delta H) (Methanobacterium thermoautotrophicum).